Here is a 355-residue protein sequence, read N- to C-terminus: tRNA-specific 2-thiouridylase MnmA (355 aa).

ATP contacts are provided by residues 6–13 and leucine 33; that span reads LLSGGVDS. Cysteine 100 functions as the Nucleophile in the catalytic mechanism. Cysteine 100 and cysteine 195 are oxidised to a cystine. Residue glycine 123 coordinates ATP. The tract at residues 145–147 is interaction with tRNA; sequence KDQ. The active-site Cysteine persulfide intermediate is cysteine 195.

This sequence belongs to the MnmA/TRMU family.

It localises to the cytoplasm. It catalyses the reaction S-sulfanyl-L-cysteinyl-[protein] + uridine(34) in tRNA + AH2 + ATP = 2-thiouridine(34) in tRNA + L-cysteinyl-[protein] + A + AMP + diphosphate + H(+). Its function is as follows. Catalyzes the 2-thiolation of uridine at the wobble position (U34) of tRNA, leading to the formation of s(2)U34. The chain is tRNA-specific 2-thiouridylase MnmA from Borreliella burgdorferi (strain ATCC 35210 / DSM 4680 / CIP 102532 / B31) (Borrelia burgdorferi).